The chain runs to 241 residues: Probable transcriptional regulatory protein LHK_02347 (241 aa).

This sequence belongs to the TACO1 family.

The protein localises to the cytoplasm. The chain is Probable transcriptional regulatory protein LHK_02347 from Laribacter hongkongensis (strain HLHK9).